A 941-amino-acid polypeptide reads, in one-letter code: Zinc finger protein 507 (941 aa).

A Phosphoserine modification is found at S95. C2H2-type zinc fingers lie at residues 122–144 (YQCSLCKFLSPSFSVLKEHVKQH) and 152–175 (LMCSECHATSRSQQELEAHVVSEH). The span at 165–177 (QELEAHVVSEHEN) shows a compositional bias: basic and acidic residues. The disordered stretch occupies residues 165-198 (QELEAHVVSEHENSASSQARSSPSGQGATERKSE). Over residues 178–192 (SASSQARSSPSGQGA) the composition is skewed to low complexity. The C2H2-type 3 zinc-finger motif lies at 237–259 (YRCLFCSYTCGQQRMLKTHAWKH). The residue at position 415 (S415) is a Phosphoserine. Residues 455-477 (ELSKGLAPDENAPPGRRRTNSES) are disordered. 5 consecutive C2H2-type zinc fingers follow at residues 630–652 (YRCRLCNYSSGNRGYIKQHLRVH), 658–680 (YQCPICEHIAENSKDLESHMINH), 686–709 (HQCKQCKESFHYKSQLRNHEREQH), 746–768 (YRCDVCDYTSTTYVGVRNHRRVH), and 774–796 (YRCSLCGYVCSHPPSLKSHMWKH). Positions 823–856 (GKSRGKPLLTSSEERTGPTTGSPENLVSSSELTS) are disordered. The segment covering 839 to 856 (GPTTGSPENLVSSSELTS) has biased composition (polar residues). Residues 899–921 (FCCCICGFESTSKESLLDHMKEH) form a C2H2-type 9 zinc finger.

The protein belongs to the krueppel C2H2-type zinc-finger protein family.

Its subcellular location is the nucleus. Functionally, may be involved in transcriptional regulation. In Mus musculus (Mouse), this protein is Zinc finger protein 507 (Znf507).